The primary structure comprises 298 residues: Urease accessory protein UreD 3 (298 aa).

Residues 1–30 (MADEAGTRSAGGRPIPAAEPLRPALSRQRS) are disordered.

This sequence belongs to the UreD family. In terms of assembly, ureD, UreF and UreG form a complex that acts as a GTP-hydrolysis-dependent molecular chaperone, activating the urease apoprotein by helping to assemble the nickel containing metallocenter of UreC. The UreE protein probably delivers the nickel.

The protein resides in the cytoplasm. Required for maturation of urease via the functional incorporation of the urease nickel metallocenter. This Methylorubrum extorquens (strain PA1) (Methylobacterium extorquens) protein is Urease accessory protein UreD 3.